The primary structure comprises 196 residues: FMN-dependent NADH:quinone oxidoreductase (196 aa).

FMN is bound at residue serine 10.

This sequence belongs to the azoreductase type 1 family. Homodimer. FMN serves as cofactor.

The catalysed reaction is 2 a quinone + NADH + H(+) = 2 a 1,4-benzosemiquinone + NAD(+). The enzyme catalyses N,N-dimethyl-1,4-phenylenediamine + anthranilate + 2 NAD(+) = 2-(4-dimethylaminophenyl)diazenylbenzoate + 2 NADH + 2 H(+). Quinone reductase that provides resistance to thiol-specific stress caused by electrophilic quinones. Functionally, also exhibits azoreductase activity. Catalyzes the reductive cleavage of the azo bond in aromatic azo compounds to the corresponding amines. The sequence is that of FMN-dependent NADH:quinone oxidoreductase from Cereibacter sphaeroides (strain ATCC 17023 / DSM 158 / JCM 6121 / CCUG 31486 / LMG 2827 / NBRC 12203 / NCIMB 8253 / ATH 2.4.1.) (Rhodobacter sphaeroides).